Reading from the N-terminus, the 55-residue chain is ATP synthase protein 8 (55 aa).

Residues 8-28 form a helical membrane-spanning segment; the sequence is WWIVNFSLIWASVLIVISLLL. Positions 34–55 are disordered; the sequence is NSAGQSSSSLTLNKTTTNWQWL. A compositionally biased stretch (low complexity) spans 39–55; sequence SSSSLTLNKTTTNWQWL.

Belongs to the ATPase protein 8 family. F-type ATPases have 2 components, CF(1) - the catalytic core - and CF(0) - the membrane proton channel.

It is found in the mitochondrion membrane. In terms of biological role, mitochondrial membrane ATP synthase (F(1)F(0) ATP synthase or Complex V) produces ATP from ADP in the presence of a proton gradient across the membrane which is generated by electron transport complexes of the respiratory chain. F-type ATPases consist of two structural domains, F(1) - containing the extramembraneous catalytic core and F(0) - containing the membrane proton channel, linked together by a central stalk and a peripheral stalk. During catalysis, ATP synthesis in the catalytic domain of F(1) is coupled via a rotary mechanism of the central stalk subunits to proton translocation. Part of the complex F(0) domain. Minor subunit located with subunit a in the membrane. The polypeptide is ATP synthase protein 8 (MT-ATP8) (Strongylocentrotus purpuratus (Purple sea urchin)).